The sequence spans 371 residues: UDP-N-acetylglucosamine--N-acetylmuramyl-(pentapeptide) pyrophosphoryl-undecaprenol N-acetylglucosamine transferase (371 aa).

UDP-N-acetyl-alpha-D-glucosamine is bound by residues 15 to 17 (TGG), N126, R172, S199, I256, 275 to 280 (ALTVSE), and Q301.

This sequence belongs to the glycosyltransferase 28 family. MurG subfamily.

It localises to the cell inner membrane. It carries out the reaction di-trans,octa-cis-undecaprenyl diphospho-N-acetyl-alpha-D-muramoyl-L-alanyl-D-glutamyl-meso-2,6-diaminopimeloyl-D-alanyl-D-alanine + UDP-N-acetyl-alpha-D-glucosamine = di-trans,octa-cis-undecaprenyl diphospho-[N-acetyl-alpha-D-glucosaminyl-(1-&gt;4)]-N-acetyl-alpha-D-muramoyl-L-alanyl-D-glutamyl-meso-2,6-diaminopimeloyl-D-alanyl-D-alanine + UDP + H(+). Its pathway is cell wall biogenesis; peptidoglycan biosynthesis. Functionally, cell wall formation. Catalyzes the transfer of a GlcNAc subunit on undecaprenyl-pyrophosphoryl-MurNAc-pentapeptide (lipid intermediate I) to form undecaprenyl-pyrophosphoryl-MurNAc-(pentapeptide)GlcNAc (lipid intermediate II). The chain is UDP-N-acetylglucosamine--N-acetylmuramyl-(pentapeptide) pyrophosphoryl-undecaprenol N-acetylglucosamine transferase from Francisella tularensis subsp. tularensis (strain FSC 198).